The primary structure comprises 313 residues: Dihydroorotate dehydrogenase B (NAD(+)), catalytic subunit (313 aa).

FMN-binding positions include S21 and K45–A46. Substrate contacts are provided by residues K45 and N69–L73. FMN contacts are provided by N99 and N127. N127 contacts substrate. C130 acts as the Nucleophile in catalysis. Residue I191 participates in FMN binding. Substrate is bound at residue N192–T193. FMN is bound by residues G217, G243–G244, and G265–T266.

Belongs to the dihydroorotate dehydrogenase family. Type 1 subfamily. In terms of assembly, heterotetramer of 2 PyrK and 2 PyrD type B subunits. It depends on FMN as a cofactor.

Its subcellular location is the cytoplasm. It carries out the reaction (S)-dihydroorotate + NAD(+) = orotate + NADH + H(+). It participates in pyrimidine metabolism; UMP biosynthesis via de novo pathway; orotate from (S)-dihydroorotate (NAD(+) route): step 1/1. Its function is as follows. Catalyzes the conversion of dihydroorotate to orotate with NAD(+) as electron acceptor. This is Dihydroorotate dehydrogenase B (NAD(+)), catalytic subunit (pyrD) from Bacillus caldolyticus.